The following is a 329-amino-acid chain: DNA-directed RNA polymerase subunit alpha (329 aa).

Residues 1 to 234 form an alpha N-terminal domain (alpha-NTD) region; the sequence is MQGSVTEFLK…EQLDAFVELR (234 aa). The interval 248–329 is alpha C-terminal domain (alpha-CTD); that stretch reads FDPILLRPVD…WPPASLIDND (82 aa).

This sequence belongs to the RNA polymerase alpha chain family. Homodimer. The RNAP catalytic core consists of 2 alpha, 1 beta, 1 beta' and 1 omega subunit. When a sigma factor is associated with the core the holoenzyme is formed, which can initiate transcription.

The enzyme catalyses RNA(n) + a ribonucleoside 5'-triphosphate = RNA(n+1) + diphosphate. Functionally, DNA-dependent RNA polymerase catalyzes the transcription of DNA into RNA using the four ribonucleoside triphosphates as substrates. The protein is DNA-directed RNA polymerase subunit alpha of Idiomarina loihiensis (strain ATCC BAA-735 / DSM 15497 / L2-TR).